A 182-amino-acid polypeptide reads, in one-letter code: MRVSEISKRYAKALLAVAKQKGIHTQVHAELQALVKSFAGDVSVKNYFENPMIGSDQKIAAVKASLSGKGVSEEVVNTLVLLAEKNRFGVLEQISFAYRDLLDLEEGVTRGVVRSAQPLAADAQKDIEQKITKVLNKKIVLTYEQDPKLLGGIVATVGGWTFDDSIDTHLKKLNEELNRRAN.

This sequence belongs to the ATPase delta chain family. F-type ATPases have 2 components, F(1) - the catalytic core - and F(0) - the membrane proton channel. F(1) has five subunits: alpha(3), beta(3), gamma(1), delta(1), epsilon(1). F(0) has three main subunits: a(1), b(2) and c(10-14). The alpha and beta chains form an alternating ring which encloses part of the gamma chain. F(1) is attached to F(0) by a central stalk formed by the gamma and epsilon chains, while a peripheral stalk is formed by the delta and b chains.

Its subcellular location is the cell inner membrane. F(1)F(0) ATP synthase produces ATP from ADP in the presence of a proton or sodium gradient. F-type ATPases consist of two structural domains, F(1) containing the extramembraneous catalytic core and F(0) containing the membrane proton channel, linked together by a central stalk and a peripheral stalk. During catalysis, ATP synthesis in the catalytic domain of F(1) is coupled via a rotary mechanism of the central stalk subunits to proton translocation. In terms of biological role, this protein is part of the stalk that links CF(0) to CF(1). It either transmits conformational changes from CF(0) to CF(1) or is implicated in proton conduction. This is ATP synthase subunit delta from Bdellovibrio bacteriovorus (strain ATCC 15356 / DSM 50701 / NCIMB 9529 / HD100).